Reading from the N-terminus, the 67-residue chain is uncharacterized protein (67 aa).

The protein belongs to the baculoviridae 8 kDa protein family.

This is an uncharacterized protein from Autographa californica nuclear polyhedrosis virus (AcMNPV).